A 122-amino-acid chain; its full sequence is Large ribosomal subunit protein uL18 (122 aa).

This sequence belongs to the universal ribosomal protein uL18 family. Part of the 50S ribosomal subunit; part of the 5S rRNA/L5/L18/L25 subcomplex. Contacts the 5S and 23S rRNAs.

In terms of biological role, this is one of the proteins that bind and probably mediate the attachment of the 5S RNA into the large ribosomal subunit, where it forms part of the central protuberance. The sequence is that of Large ribosomal subunit protein uL18 from Desulfitobacterium hafniense (strain DSM 10664 / DCB-2).